The primary structure comprises 167 residues: Peptide deformylase (167 aa).

Residues C91 and H133 each contribute to the Fe cation site. The active site involves E134. H137 serves as a coordination point for Fe cation.

Belongs to the polypeptide deformylase family. Fe(2+) serves as cofactor.

The catalysed reaction is N-terminal N-formyl-L-methionyl-[peptide] + H2O = N-terminal L-methionyl-[peptide] + formate. In terms of biological role, removes the formyl group from the N-terminal Met of newly synthesized proteins. Requires at least a dipeptide for an efficient rate of reaction. N-terminal L-methionine is a prerequisite for activity but the enzyme has broad specificity at other positions. This Buchnera aphidicola subsp. Schizaphis graminum (strain Sg) protein is Peptide deformylase.